The sequence spans 63 residues: Beta-insect depressant toxin Im-3 (63 aa).

Positions 1-63 (KEGYGVGKDG…KVWESSTNTC (63 aa)) constitute an LCN-type CS-alpha/beta domain. Intrachain disulfides connect cysteine 11–cysteine 63, cysteine 15–cysteine 37, cysteine 22–cysteine 44, and cysteine 26–cysteine 46.

It belongs to the long (4 C-C) scorpion toxin superfamily. Sodium channel inhibitor family. Beta subfamily. Expressed by the venom gland.

Its subcellular location is the secreted. Beta toxins bind voltage-independently at site-4 of sodium channels (Nav) and shift the voltage of activation toward more negative potentials thereby affecting sodium channel activation and promoting spontaneous and repetitive firing. Induces paralysis in cricket A.domestica but does not induce death. This is Beta-insect depressant toxin Im-3 from Isometrus maculatus (Lesser brown scorpion).